A 362-amino-acid polypeptide reads, in one-letter code: 3-dehydroquinate synthase (362 aa).

Residues 72 to 77 (DGEQYK), 106 to 110 (GVVGD), 130 to 131 (TT), lysine 143, lysine 152, and 170 to 173 (CLKT) each bind NAD(+). Positions 185, 248, and 265 each coordinate Zn(2+).

Belongs to the sugar phosphate cyclases superfamily. Dehydroquinate synthase family. The cofactor is Co(2+). Zn(2+) serves as cofactor. It depends on NAD(+) as a cofactor.

The protein localises to the cytoplasm. The catalysed reaction is 7-phospho-2-dehydro-3-deoxy-D-arabino-heptonate = 3-dehydroquinate + phosphate. Its pathway is metabolic intermediate biosynthesis; chorismate biosynthesis; chorismate from D-erythrose 4-phosphate and phosphoenolpyruvate: step 2/7. Catalyzes the conversion of 3-deoxy-D-arabino-heptulosonate 7-phosphate (DAHP) to dehydroquinate (DHQ). This chain is 3-dehydroquinate synthase, found in Aliivibrio fischeri (strain ATCC 700601 / ES114) (Vibrio fischeri).